The sequence spans 102 residues: Ribosomal silencing factor RsfS (102 aa).

The protein belongs to the Iojap/RsfS family. In terms of assembly, interacts with ribosomal protein uL14 (rplN).

It is found in the cytoplasm. In terms of biological role, functions as a ribosomal silencing factor. Interacts with ribosomal protein uL14 (rplN), blocking formation of intersubunit bridge B8. Prevents association of the 30S and 50S ribosomal subunits and the formation of functional ribosomes, thus repressing translation. The sequence is that of Ribosomal silencing factor RsfS from Haemophilus influenzae (strain ATCC 51907 / DSM 11121 / KW20 / Rd).